Here is a 1013-residue protein sequence, read N- to C-terminus: MGDKKDDKDSPKKNKGKERRDLDDLKKEVAMTEHKMSVEEVCRKYNTDCVQGLTHSKAQEILARDGPNALTPPPTTPEWVKFCRQLFGGFSILLWIGAILCFLAYGIQAGTEDDPSGDNLYLGIVLAAVVIITGCFSYYQEAKSSKIMESFKNMVPQQALVIREGEKMQVNAEEVVVGDLVEIKGGDRVPADLRIISAHGCKVDNSSLTGESEPQTRSPDCTHDNPLETRNITFFSTNCVEGTARGVVVATGDRTVMGRIATLASGLEVGKTPIAIEIEHFIQLITGVAVFLGVSFFILSLILGYTWLEAVIFLIGIIVANVPEGLLATVTVCLTLTAKRMARKNCLVKNLEAVETLGSTSTICSDKTGTLTQNRMTVAHMWFDNQIHEADTTEDQSGTSFDKSSHTWVALSHIAGLCNRAVFKGGQDNIPVLKRDVAGDASESALLKCIELSSGSVKLMRERNKKVAEIPFNSTNKYQLSIHETEDPNDNRYLLVMKGAPERILDRCSTILLQGKEQPLDEEMKEAFQNAYLELGGLGERVLGFCHYYLPEEQFPKGFAFDCDDVNFTTDNLCFVGLMSMIDPPRAAVPDAVGKCRSAGIKVIMVTGDHPITAKAIAKGVGIISEGNETVEDIAARLNIPVSQVNPRDAKACVIHGTDLKDFTSEQIDEILQNHTEIVFARTSPQQKLIIVEGCQRQGAIVAVTGDGVNDSPALKKADIGVAMGIAGSDVSKQAADMILLDDNFASIVTGVEEGRLIFDNLKKSIAYTLTSNIPEITPFLLFIMANIPLPLGTITILCIDLGTDMVPAISLAYEAAESDIMKRQPRNPRTDKLVNERLISMAYGQIGMIQALGGFFSYFVILAENGFLPGNLVGIRLNWDDRTVNDLEDSYGQQWTYEQRKVVEFTCHTAFFVSIVVVQWADLIICKTRRNSVFQQGMKNKILIFGLFEETALAAFLSYCPGMDVALRMYPLKPSWWFCAFPYSFLIFVYDEIRKLILRRNPGGWVEKETYY.

Residues 1-24 (MGDKKDDKDSPKKNKGKERRDLDD) form a disordered region. At 1 to 77 (MGDKKDDKDS…NALTPPPTTP (77 aa)) the chain is on the cytoplasmic side. Phosphoserine is present on residues Ser37 and Ser56. The segment at 72 to 74 (PPP) is interaction with phosphoinositide-3 kinase. The chain crosses the membrane as a helical span at residues 78–98 (EWVKFCRQLFGGFSILLWIGA). Topologically, residues 99-121 (ILCFLAYGIQAGTEDDPSGDNLY) are extracellular. A helical transmembrane segment spans residues 122–142 (LGIVLAAVVIITGCFSYYQEA). Over 143–278 (KSSKIMESFK…VGKTPIAIEI (136 aa)) the chain is Cytoplasmic. A phosphoserine mark is found at Ser218 and Ser265. Residues 279–298 (EHFIQLITGVAVFLGVSFFI) form a helical membrane-spanning segment. The Extracellular portion of the chain corresponds to 299–310 (LSLILGYTWLEA). A helical transmembrane segment spans residues 311–328 (VIFLIGIIVANVPEGLLA). Topologically, residues 329-762 (TVTVCLTLTA…EEGRLIFDNL (434 aa)) are cytoplasmic. Asp366 (4-aspartylphosphate intermediate) is an active-site residue. Residue Ser442 is modified to Phosphoserine. Tyr548 is subject to Phosphotyrosine. Residues Asp707 and Asp711 each contribute to the Mg(2+) site. A helical transmembrane segment spans residues 763–782 (KKSIAYTLTSNIPEITPFLL). Residues 783–792 (FIMANIPLPL) are Extracellular-facing. A helical membrane pass occupies residues 793–813 (GTITILCIDLGTDMVPAISLA). Topologically, residues 814–833 (YEAAESDIMKRQPRNPRTDK) are cytoplasmic. The chain crosses the membrane as a helical span at residues 834 to 856 (LVNERLISMAYGQIGMIQALGGF). Over 857–908 (FSYFVILAENGFLPGNLVGIRLNWDDRTVNDLEDSYGQQWTYEQRKVVEFTC) the chain is Extracellular. The helical transmembrane segment at 909–928 (HTAFFVSIVVVQWADLIICK) threads the bilayer. Residues 929–941 (TRRNSVFQQGMKN) lie on the Cytoplasmic side of the membrane. Residue Ser933 is modified to Phosphoserine; by PKA. Residues 942–960 (KILIFGLFEETALAAFLSY) form a helical membrane-spanning segment. The Extracellular portion of the chain corresponds to 961–975 (CPGMDVALRMYPLKP). The helical transmembrane segment at 976-996 (SWWFCAFPYSFLIFVYDEIRK) threads the bilayer. Residues 997-1013 (LILRRNPGGWVEKETYY) are Cytoplasmic-facing.

Belongs to the cation transport ATPase (P-type) (TC 3.A.3) family. Type IIC subfamily. The sodium/potassium-transporting ATPase is composed of a catalytic alpha subunit, an auxiliary non-catalytic beta subunit and an additional regulatory subunit. Interacts with regulatory subunit FXYD1.

It localises to the cell membrane. The enzyme catalyses K(+)(out) + Na(+)(in) + ATP + H2O = K(+)(in) + Na(+)(out) + ADP + phosphate + H(+). Its function is as follows. This is the catalytic component of the active enzyme, which catalyzes the hydrolysis of ATP coupled with the exchange of sodium and potassium ions across the plasma membrane. This action creates the electrochemical gradient of sodium and potassium ions, providing the energy for active transport of various nutrients. The protein is Sodium/potassium-transporting ATPase subunit alpha-3 (ATP1A3) of Homo sapiens (Human).